A 166-amino-acid polypeptide reads, in one-letter code: EAVAPYERPALSKNIFYLREIADADQLVEAIKLKDGRTLDADIVVVGVGGRPLVSLFKTSIPDVYAVGDVATYPLKLYNELRRVEHVDHARLSIEEYDYLPYFYSRTFNLAWQFYGDNVGETVLFPDNFGTYWIKVVGVFLEGGTPDEYKVARVQPPVESLDQLAK.

It belongs to the FAD-dependent oxidoreductase family. FAD is required as a cofactor. In terms of processing, the N-terminus is blocked.

The catalysed reaction is 2 monodehydro-L-ascorbate radical + NADH + H(+) = 2 L-ascorbate + NAD(+). Catalyzes the conversion of monodehydroascorbate to ascorbate, oxidizing NADH in the process. The protein is Monodehydroascorbate reductase, fruit isozyme of Cucumis sativus (Cucumber).